A 154-amino-acid chain; its full sequence is Myoglobin (154 aa).

In terms of domain architecture, Globin spans glycine 2–lysine 148. Residue histidine 65 coordinates nitrite. An O2-binding site is contributed by histidine 65. Position 94 (histidine 94) interacts with heme b.

Belongs to the globin family. Monomeric.

The protein localises to the cytoplasm. It localises to the sarcoplasm. The catalysed reaction is Fe(III)-heme b-[protein] + nitric oxide + H2O = Fe(II)-heme b-[protein] + nitrite + 2 H(+). It carries out the reaction H2O2 + AH2 = A + 2 H2O. Its function is as follows. Monomeric heme protein which primary function is to store oxygen and facilitate its diffusion within muscle tissues. Reversibly binds oxygen through a pentacoordinated heme iron and enables its timely and efficient release as needed during periods of heightened demand. Depending on the oxidative conditions of tissues and cells, and in addition to its ability to bind oxygen, it also has a nitrite reductase activity whereby it regulates the production of bioactive nitric oxide. Under stress conditions, like hypoxia and anoxia, it also protects cells against reactive oxygen species thanks to its pseudoperoxidase activity. This is Myoglobin (MB) from Chelonia mydas (Green sea-turtle).